The chain runs to 170 residues: Small ribosomal subunit protein uS3mB (170 aa).

The N-terminal 30 residues, 1–30, are a transit peptide targeting the mitochondrion; the sequence is MAAPVMSAFGRLQGLIRTERSLLTHVQSRC.

This sequence belongs to the universal ribosomal protein uS3 family. As to quaternary structure, component of the mitochondrial ribosome small subunit (28S) which comprises a 12S rRNA and about 30 distinct proteins.

Its subcellular location is the mitochondrion. This chain is Small ribosomal subunit protein uS3mB (mrps24-b), found in Xenopus laevis (African clawed frog).